We begin with the raw amino-acid sequence, 291 residues long: Insulin-like growth factor-binding protein 3 (291 aa).

The N-terminal stretch at 1–27 is a signal peptide; it reads MLRARPALWAAALTALTLLRGPPAARA. The interval 28–134 is IGF-binding; the sequence is GAGTMGAGPV…LRPYLLPSAS (107 aa). Residues 36–119 enclose the IGFBP N-terminal domain; it reads PVVRCEPCDA…LDGRGLCANA (84 aa). 6 disulfide bridges follow: C40-C69, C43-C71, C51-C72, C60-C75, C83-C96, and C90-C116. N118 and N136 each carry an N-linked (GlcNAc...) asparagine glycan. Disordered regions lie at residues 132–162 and 177–211; these read SASGNGSESEEDHSMGSTENQAGPSTHRVPV and KGHAKDSQRYKVDYESQSTDTQNFSSESKRETEYG. Over residues 146–155 the composition is skewed to polar residues; it reads MGSTENQAGP. S148 is subject to Phosphoserine. The segment covering 177 to 190 has biased composition (basic and acidic residues); that stretch reads KGHAKDSQRYKVDY. Over residues 191 to 202 the composition is skewed to polar residues; the sequence is ESQSTDTQNFSS. N-linked (GlcNAc...) asparagine glycosylation occurs at N199. The residue at position 201 (S201) is a Phosphoserine. The region spanning 210–285 is the Thyroglobulin type-1 domain; that stretch reads YGPCRREMED…DVKGKGDVHC (76 aa). Cystine bridges form between C213–C240, C251–C262, and C264–C285.

As to quaternary structure, interacts with XLKD1. Binds IGF2 more than IGF1. Forms a ternary complex of about 140 to 150 kDa with IGF1 or IGF2 and a 85 kDa glycoprotein (ALS). Interacts with humanin; humanin competes with importin KPNB1 for binding to IGFBP3, blocking IGFBP3 nuclear import and IGFBP3-mediated apoptosis. Interacts with TMEM219. Interacts with RXRA; this interaction modulates the transcriptional activity of RXRA. Interacts with LRP1; this interaction mediates cell growth inhibition independent of IGF1. In terms of processing, phosphorylated by FAM20C in the extracellular medium. Phosphorylated by CK2; resulting in decreased nuclear localization. In terms of tissue distribution, plasma; expressed by most tissues.

The protein resides in the secreted. The protein localises to the nucleus. In terms of biological role, multifunctional protein that plays a critical role in regulating the availability of IGFs such as IGF1 and IGF2 to their receptors and thereby regulates IGF-mediated cellular processes including proliferation, differentiation, and apoptosis in a cell-type specific manner. Also exhibits IGF-independent antiproliferative and apoptotic effects mediated by its receptor TMEM219/IGFBP-3R. Inhibits the positive effect of humanin on insulin sensitivity. Promotes testicular germ cell apoptosis. Acts via LRP-1/alpha2M receptor, also known as TGF-beta type V receptor, to mediate cell growth inhibition independent of IGF1. Mechanistically, induces serine-specific dephosphorylation of IRS1 or IRS2 upon ligation to its receptor, leading to the inhibitory cascade. In the nucleus, interacts with transcription factors such as retinoid X receptor-alpha/RXRA to regulate transcriptional signaling and apoptosis. This chain is Insulin-like growth factor-binding protein 3 (IGFBP3), found in Bos taurus (Bovine).